Here is a 406-residue protein sequence, read N- to C-terminus: Phosphopentomutase (406 aa).

Residues aspartate 10, aspartate 305, histidine 310, aspartate 346, histidine 347, and histidine 358 each coordinate Mn(2+).

The protein belongs to the phosphopentomutase family. It depends on Mn(2+) as a cofactor.

Its subcellular location is the cytoplasm. It carries out the reaction 2-deoxy-alpha-D-ribose 1-phosphate = 2-deoxy-D-ribose 5-phosphate. The enzyme catalyses alpha-D-ribose 1-phosphate = D-ribose 5-phosphate. It participates in carbohydrate degradation; 2-deoxy-D-ribose 1-phosphate degradation; D-glyceraldehyde 3-phosphate and acetaldehyde from 2-deoxy-alpha-D-ribose 1-phosphate: step 1/2. Its function is as follows. Isomerase that catalyzes the conversion of deoxy-ribose 1-phosphate (dRib-1-P) and ribose 1-phosphate (Rib-1-P) to deoxy-ribose 5-phosphate (dRib-5-P) and ribose 5-phosphate (Rib-5-P), respectively. In Allorhizobium ampelinum (strain ATCC BAA-846 / DSM 112012 / S4) (Agrobacterium vitis (strain S4)), this protein is Phosphopentomutase.